A 259-amino-acid polypeptide reads, in one-letter code: Ubiquinone biosynthesis protein COQ4 homolog, mitochondrial (259 aa).

Residues His-162, Asp-163, His-166, and Glu-178 each coordinate Zn(2+).

The protein belongs to the COQ4 family. As to quaternary structure, component of a multi-subunit COQ enzyme complex. It depends on Zn(2+) as a cofactor.

Its subcellular location is the mitochondrion inner membrane. The catalysed reaction is a 4-hydroxy-3-methoxy-5-(all-trans-polyprenyl)benzoate + H(+) = a 2-methoxy-6-(all-trans-polyprenyl)phenol + CO2. The protein operates within cofactor biosynthesis; ubiquinone biosynthesis. In terms of biological role, lyase that catalyzes the C1-decarboxylation of 4-hydroxy-3-methoxy-5-(all-trans-polyprenyl)benzoic acid into 2-methoxy-6-(all-trans-polyprenyl)phenol during ubiquinone biosynthesis. The protein is Ubiquinone biosynthesis protein COQ4 homolog, mitochondrial of Bombyx mori (Silk moth).